The primary structure comprises 3974 residues: Hybrid PKS-NRPS synthetase 1 (3974 aa).

In terms of domain architecture, Ketosynthase family 3 (KS3) spans 5 to 442; it reads SQKIAIIGSA…GTNAHCLIES (438 aa). Residues cysteine 179, histidine 316, and histidine 362 each act as for beta-ketoacyl synthase activity in the active site. The malonyl-CoA:ACP transacylase (MAT) domain stretch occupies residues 561 to 883; that stretch reads IFTGQGAQWA…TGILERGLDD (323 aa). The interval 954-1079 is N-terminal hotdog fold; the sequence is HPLLGSRLSA…HDSELGIPES (126 aa). The segment at 954–1251 is dehydratase (DH) domain; sequence HPLLGSRLSA…QVESVKLVPV (298 aa). The region spanning 954 to 1257 is the PKS/mFAS DH domain; sequence HPLLGSRLSA…LVPVITPDAS (304 aa). Residue histidine 986 is the Proton acceptor; for dehydratase activity of the active site. The C-terminal hotdog fold stretch occupies residues 1107 to 1257; that stretch reads TTPISSAKIY…LVPVITPDAS (151 aa). The Proton donor; for dehydratase activity role is filled by aspartate 1165. The tract at residues 1398–1529 is methyltransferase (MT) domain; sequence PWNTELRNAI…GYLLLVAKTG (132 aa). A ketoreductase (KR) domain region spans residues 2108–2282; sequence TYFLAGMTDS…ASIMDTGVVT (175 aa). The tract at residues 2492-2516 is disordered; the sequence is AGRSASPGASCSDRSLSTRSDETRS. The span at 2498–2509 shows a compositional bias: polar residues; it reads PGASCSDRSLST. Residues 2560-2994 form a condensation (C) domain region; sequence APLSPGQAQL…LERLRTSSDQ (435 aa). The adenylation (A) (KR) domain stretch occupies residues 3021 to 3423; the sequence is DAMAEKYFDQ…DGSLILLGRM (403 aa). The Carrier domain maps to 3537 to 3613; that stretch reads SADQLVEAEV…EMAEKMASVR (77 aa). Serine 3573 carries the post-translational modification O-(pantetheine 4'-phosphoryl)serine. A reductase (RED) domain region spans residues 3657 to 3940; the sequence is VVLTGAADLL…KLEMGEWIAL (284 aa).

This sequence in the C-terminal section; belongs to the NRP synthetase family.

It functions in the pathway secondary metabolite biosynthesis. Hybrid PKS-NRPS synthetase; part of the hps1-dma1 gene cluster that probably mediates the biosynthesis a derivative of cyclopiazonic acid (CPA). The hybrid polyketide synthase-nonribosomal peptide synthetase (PKS-NRPS) nps1 might incorporates acetyl-CoA, malonyl-CoA, and tryptophan (Trp) and utilizes a C-terminal redox-incompetent reductase domain to make and release the tryptophan tetramic acid, cyclo-acetoacetyl-L-tryptophan (c-AATrp), as the first intermediate in the pathway. In addition, the cluster also includes the tryptophan dimethylallyltransferase dma1, the FAD-dependent oxidoreductase toxD, the cytochrome P450 monooxygenase cyp3.1 and the methyltransferase DOTSEDRAFT_139328; the latter 2 being not present in all CPA-producing fungi but involved in additional modifications that occur in biosynthesis the of a range of CPA and CPA-like products. Further studies are required to clarify whether the CPA-like hps1-dma1 cluster is functional or a non-functional relic reflecting evolution of D.septosporum. The polypeptide is Hybrid PKS-NRPS synthetase 1 (Dothistroma septosporum (strain NZE10 / CBS 128990) (Red band needle blight fungus)).